Reading from the N-terminus, the 534-residue chain is Cytochrome c oxidase subunit 1 (534 aa).

A helical membrane pass occupies residues 16-36 (VLYFMLAIFSGMAGTAMSLII). Ca(2+) contacts are provided by E39, A42, and G44. The next 6 helical transmembrane spans lie at 57–77 (VLVV…ALIG), 101–121 (IAFW…LVES), 147–167 (AIFA…NFIV), 182–202 (LPLF…SLPV), 235–255 (LFYF…FGII), and 267–287 (VFGE…GFLV). H62 contacts Fe(II)-heme a. Residue H241 coordinates Cu cation. Residues 241 to 245 (HPEVY) constitute a cross-link (1'-histidyl-3'-tyrosine (His-Tyr)). Y245 is a binding site for O2. Residues H290 and H291 each contribute to the Cu cation site. 2 helical membrane passes run 310–330 (MIIA…IYGG) and 338–358 (MLYA…GVAL). Mg(2+) contacts are provided by H368 and D369. 2 helical membrane-spanning segments follow: residues 372 to 392 (YVVG…LFAG) and 414 to 434 (FWLI…LGIN). H376 contacts heme a3. H378 is a binding site for Fe(II)-heme a. Residue P441 coordinates Ca(2+). A helical membrane pass occupies residues 452–472 (YVASIGSFIATLSLFLFIYIL).

This sequence belongs to the heme-copper respiratory oxidase family. In terms of assembly, component of the cytochrome c oxidase (complex IV, CIV), a multisubunit enzyme composed of a catalytic core of 3 subunits and several supernumerary subunits. The complex exists as a monomer or a dimer and forms supercomplexes (SCs) in the inner mitochondrial membrane with ubiquinol-cytochrome c oxidoreductase (cytochrome b-c1 complex, complex III, CIII). Requires heme as cofactor. Cu cation is required as a cofactor.

The protein localises to the mitochondrion inner membrane. The catalysed reaction is 4 Fe(II)-[cytochrome c] + O2 + 8 H(+)(in) = 4 Fe(III)-[cytochrome c] + 2 H2O + 4 H(+)(out). The protein operates within energy metabolism; oxidative phosphorylation. In terms of biological role, component of the cytochrome c oxidase, the last enzyme in the mitochondrial electron transport chain which drives oxidative phosphorylation. The respiratory chain contains 3 multisubunit complexes succinate dehydrogenase (complex II, CII), ubiquinol-cytochrome c oxidoreductase (cytochrome b-c1 complex, complex III, CIII) and cytochrome c oxidase (complex IV, CIV), that cooperate to transfer electrons derived from NADH and succinate to molecular oxygen, creating an electrochemical gradient over the inner membrane that drives transmembrane transport and the ATP synthase. Cytochrome c oxidase is the component of the respiratory chain that catalyzes the reduction of oxygen to water. Electrons originating from reduced cytochrome c in the intermembrane space (IMS) are transferred via the dinuclear copper A center (CU(A)) of subunit 2 and heme A of subunit 1 to the active site in subunit 1, a binuclear center (BNC) formed by heme A3 and copper B (CU(B)). The BNC reduces molecular oxygen to 2 water molecules using 4 electrons from cytochrome c in the IMS and 4 protons from the mitochondrial matrix. The polypeptide is Cytochrome c oxidase subunit 1 (COXI) (Saccharomyces paradoxus (Yeast)).